The primary structure comprises 1243 residues: Probable phospholipid-transporting ATPase 7 (1243 aa).

The Cytoplasmic portion of the chain corresponds to 1 to 74; it reads MGRRRIRSRI…TTRYNLITFL (74 aa). A helical transmembrane segment spans residues 75–96; sequence PKCLYEQFHRVANFYFLVAAIL. Residues 97-100 lie on the Extracellular side of the membrane; that stretch reads SVFP. The chain crosses the membrane as a helical span at residues 101–123; the sequence is LSPFNKWSMIAPLIFVVGLSMGK. At 124 to 305 the chain is on the cytoplasmic side; sequence EALEDWRRFM…SRIEKRMDYI (182 aa). A helical membrane pass occupies residues 306-327; it reads IYTLFALLVLVSFISSLGFAVM. Residues 328–359 lie on the Extracellular side of the membrane; that stretch reads TKMHMGDWWYLRPDKPERLTNPRNPFHAWVVH. The helical transmembrane segment at 360-377 threads the bilayer; it reads LITAVLLYGYLIPISLYV. Residues 378–941 lie on the Cytoplasmic side of the membrane; that stretch reads SIELVKVLQA…HGHWCYKRIA (564 aa). Residue Asp-425 is the 4-aspartylphosphate intermediate of the active site. Lys-623 participates in a covalent cross-link: Glycyl lysine isopeptide (Lys-Gly) (interchain with G-Cter in ubiquitin). Mg(2+)-binding residues include Asp-886 and Asp-890. Residues 942 to 961 traverse the membrane as a helical segment; it reads QMICYFFYKNITFGLTLFYF. The Extracellular portion of the chain corresponds to 962-975; that stretch reads EAFTGFSGQAIYND. Residues 976–995 traverse the membrane as a helical segment; sequence SYLLLFNVILTSLPVIALGV. The Cytoplasmic segment spans residues 996–1025; that stretch reads FEQDVSSEVCLQFPALYQQGPKNLFFDWYR. A helical transmembrane segment spans residues 1026–1048; it reads IIGWMANGVYASVVIFSLNIGIF. The Extracellular segment spans residues 1049–1061; sequence HVQSFCSGGQTAD. Residues 1062-1084 form a helical membrane-spanning segment; it reads MDAMGTAMFTCIIWAVNVQIALT. At 1085-1090 the chain is on the cytoplasmic side; sequence MSHFTW. A helical transmembrane segment spans residues 1091-1111; the sequence is IQHVLIWGSIVTWYIFLALFG. At 1112–1128 the chain is on the extracellular side; that stretch reads MLPPKVSGNIFHMLSET. A helical transmembrane segment spans residues 1129-1153; that stretch reads LAPAPIFWLTSLLVIAATTLPYLAY. The Cytoplasmic segment spans residues 1154–1243; the sequence is ISFQRSLNPL…TDTTSTTQHS (90 aa).

It belongs to the cation transport ATPase (P-type) (TC 3.A.3) family. Type IV subfamily.

It localises to the cell membrane. It is found in the endomembrane system. It catalyses the reaction ATP + H2O + phospholipidSide 1 = ADP + phosphate + phospholipidSide 2.. Functionally, involved in transport of phospholipids and in regulation of pollen plasma membrane lipid asymmetry. This is Probable phospholipid-transporting ATPase 7 from Arabidopsis thaliana (Mouse-ear cress).